The chain runs to 132 residues: Large-conductance mechanosensitive channel (132 aa).

A run of 3 helical transmembrane segments spans residues 8 to 28 (FALK…GAFG), 30 to 50 (IVSS…LGGV), and 67 to 87 (GAFI…FLFI).

The protein belongs to the MscL family. In terms of assembly, homopentamer.

The protein resides in the cell membrane. Functionally, channel that opens in response to stretch forces in the membrane lipid bilayer. May participate in the regulation of osmotic pressure changes within the cell. The chain is Large-conductance mechanosensitive channel from Bacillus cytotoxicus (strain DSM 22905 / CIP 110041 / 391-98 / NVH 391-98).